The primary structure comprises 428 residues: MLLEQIWGFLTAHPISVVTTILIVYLIHITLKPLNRVRRLGDVGLFFGKPELKGFYRERQLERLKLLRRVGDMPPVFPNGWYCVCESEKLANNQIMEITVLGQFLSLIRSESGAVYITDSYCPHIGANFNIGGRVVRDNCIQCPFHGWIFSAETGKCVEVPYDEGRIPEQAKVTTWPCIERNNNIYLWYHCDGAEPEWEIPEITEITDGFWHLGGRTEHEVMCHIQEIPENGADIAHLNYLHKSAPPVTKGSDIIKTDLSDPQPAVQHVWDGKWEVKSEEDRHCGVMHLNQFMTFWGYKVPLTSSKLVAEQHGPGIVHMLFDFGIWGKGVVFQTVTPEEALLQRVRFRIFSNIPWFFVKFFMTVEAMQFERDVFIWSNKKYIKSPLLVKNDGPIQKHRRWFSQFYTENSPKMLKDGSLSNQAKSIFDW.

Residues 6-26 (IWGFLTAHPISVVTTILIVYL) traverse the membrane as a helical segment. The 107-residue stretch at 81 to 187 (WYCVCESEKL…CIERNNNIYL (107 aa)) folds into the Rieske domain. The [2Fe-2S] cluster site is built by Cys122, His124, Cys143, and His146.

The protein belongs to the cholesterol 7-desaturase family. [2Fe-2S] cluster is required as a cofactor. As to expression, expressed in intestine at all postembryonic stages, including dauer. Expression is reduced in daf-2 mutants.

The protein localises to the membrane. It catalyses the reaction cholesterol + NADPH + O2 + H(+) = 7-dehydrocholesterol + NADP(+) + 2 H2O. It carries out the reaction cholesterol + NADH + O2 + H(+) = 7-dehydrocholesterol + NAD(+) + 2 H2O. The protein operates within steroid hormone biosynthesis; dafachronic acid biosynthesis. Catalyzes the production of 7-dehydrocholesterol (7-DHC or cholesta-5,7-dien-3beta-ol) by inserting a double bond (desaturating) at the C7-C8 single bond of cholesterol. This reaction is the first step in the synthesis of the steroid hormone Delta(7)-dafachronic acid (one of the principal steroid hormones in nematodes). Dafachronic acids bind directly to the nuclear hormone receptor (NHR) daf-12, suppressing dauer formation and inducing reproductive growth. In Caenorhabditis elegans, this protein is Cholesterol 7-desaturase (daf-36).